We begin with the raw amino-acid sequence, 341 residues long: UDP-3-O-acylglucosamine N-acyltransferase (341 aa).

Histidine 241 (proton acceptor) is an active-site residue.

The protein belongs to the transferase hexapeptide repeat family. LpxD subfamily. Homotrimer.

The enzyme catalyses a UDP-3-O-[(3R)-3-hydroxyacyl]-alpha-D-glucosamine + a (3R)-hydroxyacyl-[ACP] = a UDP-2-N,3-O-bis[(3R)-3-hydroxyacyl]-alpha-D-glucosamine + holo-[ACP] + H(+). It functions in the pathway bacterial outer membrane biogenesis; LPS lipid A biosynthesis. Functionally, catalyzes the N-acylation of UDP-3-O-acylglucosamine using 3-hydroxyacyl-ACP as the acyl donor. Is involved in the biosynthesis of lipid A, a phosphorylated glycolipid that anchors the lipopolysaccharide to the outer membrane of the cell. This is UDP-3-O-acylglucosamine N-acyltransferase from Christiangramia forsetii (strain DSM 17595 / CGMCC 1.15422 / KT0803) (Gramella forsetii).